A 263-amino-acid chain; its full sequence is 4-hydroxy-tetrahydrodipicolinate reductase (263 aa).

10 to 15 (GASGKM) serves as a coordination point for NAD(+). NADP(+) is bound at residue R38. Residues 97 to 99 (GTT) and 123 to 126 (APNF) contribute to the NAD(+) site. H153 (proton donor/acceptor) is an active-site residue. H154 is a binding site for (S)-2,3,4,5-tetrahydrodipicolinate. Catalysis depends on K157, which acts as the Proton donor. A (S)-2,3,4,5-tetrahydrodipicolinate-binding site is contributed by 163-164 (GT).

This sequence belongs to the DapB family.

Its subcellular location is the cytoplasm. It catalyses the reaction (S)-2,3,4,5-tetrahydrodipicolinate + NAD(+) + H2O = (2S,4S)-4-hydroxy-2,3,4,5-tetrahydrodipicolinate + NADH + H(+). It carries out the reaction (S)-2,3,4,5-tetrahydrodipicolinate + NADP(+) + H2O = (2S,4S)-4-hydroxy-2,3,4,5-tetrahydrodipicolinate + NADPH + H(+). It functions in the pathway amino-acid biosynthesis; L-lysine biosynthesis via DAP pathway; (S)-tetrahydrodipicolinate from L-aspartate: step 4/4. Functionally, catalyzes the conversion of 4-hydroxy-tetrahydrodipicolinate (HTPA) to tetrahydrodipicolinate. This is 4-hydroxy-tetrahydrodipicolinate reductase from Dehalococcoides mccartyi (strain ATCC BAA-2100 / JCM 16839 / KCTC 5957 / BAV1).